A 179-amino-acid polypeptide reads, in one-letter code: Putative mediator of RNA polymerase II transcription subunit 28 (179 aa).

Residues 81 to 119 (SAEKNKIQLKQEIYKVKKEIENKDRLIERYKNKVKEWKY) are a coiled coil.

It belongs to the Mediator complex subunit 28 family. In terms of assembly, component of the Mediator complex.

It is found in the nucleus. Functionally, component of the Mediator complex, a coactivator involved in the regulated transcription of nearly all RNA polymerase II-dependent genes. Mediator functions as a bridge to convey information from gene-specific regulatory proteins to the basal RNA polymerase II transcription machinery. Mediator is recruited to promoters by direct interactions with regulatory proteins and serves as a scaffold for the assembly of a functional preinitiation complex with RNA polymerase II and the general transcription factors. This chain is Putative mediator of RNA polymerase II transcription subunit 28 (med28), found in Dictyostelium discoideum (Social amoeba).